Here is a 138-residue protein sequence, read N- to C-terminus: Small ribosomal subunit protein bS16 (138 aa).

The interval 92–138 (QAAKREADAKQAAKEAAEAKAAAEAEAKAAAEAESADAGAEEAPAEA) is disordered. Positions 94 to 122 (AKREADAKQAAKEAAEAKAAAEAEAKAAA) are enriched in basic and acidic residues.

It belongs to the bacterial ribosomal protein bS16 family.

This chain is Small ribosomal subunit protein bS16, found in Synechococcus sp. (strain WH7803).